We begin with the raw amino-acid sequence, 98 residues long: MPSIFTNIILAFATALLGTLVFRSHLMSSLLCLEGMMLSLFTLSTLIILNMHLTMSFMMPILLLVFAACEAAIGLALLVMVSNTYGLDYIKNLSLLQC.

The next 3 membrane-spanning stretches (helical) occupy residues Pro2–Phe22, Ser29–Leu49, and Ile61–Val81.

The protein belongs to the complex I subunit 4L family. As to quaternary structure, core subunit of respiratory chain NADH dehydrogenase (Complex I) which is composed of 45 different subunits.

The protein localises to the mitochondrion inner membrane. The catalysed reaction is a ubiquinone + NADH + 5 H(+)(in) = a ubiquinol + NAD(+) + 4 H(+)(out). Functionally, core subunit of the mitochondrial membrane respiratory chain NADH dehydrogenase (Complex I) which catalyzes electron transfer from NADH through the respiratory chain, using ubiquinone as an electron acceptor. Part of the enzyme membrane arm which is embedded in the lipid bilayer and involved in proton translocation. This Avahi laniger (Eastern woolly lemur) protein is NADH-ubiquinone oxidoreductase chain 4L (MT-ND4L).